The sequence spans 504 residues: U3 snoRNP-associated protein-like YAO (504 aa).

Positions 1 to 120 are disordered; it reads MKYNNEKKKG…DDDDDEDDDE (120 aa). The span at 20 to 33 shows a compositional bias: basic and acidic residues; sequence GSNERDPFFEEEPK. 2 stretches are compositionally biased toward acidic residues: residues 41 to 54 and 70 to 81; these read DDDD…DAEE and EVEDEDEFADET. Residues 89 to 106 show a composition bias toward basic and acidic residues; sequence LAEEMLNRRREAMRRERE. Over residues 107-120 the composition is skewed to acidic residues; sequence EADNDDDDDEDDDE. 7 WD repeats span residues 159–198, 220–259, 262–301, 304–342, 344–382, 413–452, and 456–496; these read KHRR…TDKY, NHSR…HVQA, GHRN…FITE, GHQG…RMIY, APAS…PVFV, SANS…IRPL, and PLTG…QNGV.

It belongs to the WD repeat RRP9 family. Expressed in tissues with active in cell division such as shoot apexes, root tips, lateral root primordia, embryos, endosperm, pollen grains and embryo sacs.

The protein localises to the nucleus. The protein resides in the nucleolus. In terms of biological role, component of a nucleolar small nuclear ribonucleoprotein particle (snoRNP) thought to participate in the processing and modification of pre-ribosomal RNA. Essential for embryogenesis. Plays a critical role in embryo sac development and gametic cell fate. Required for the correct positioning of the first division plane of zygote. May function during early embryogenesis. This Arabidopsis thaliana (Mouse-ear cress) protein is U3 snoRNP-associated protein-like YAO.